The sequence spans 368 residues: Type 2 DNA topoisomerase 6 subunit A (368 aa).

A Topo IIA-type catalytic domain is found at 9–148; that stretch reads TEDEIARERL…FHMRPEESGA (140 aa). The active-site O-(5'-phospho-DNA)-tyrosine intermediate is the Tyr103. 2 residues coordinate Mg(2+): Glu201 and Asp253.

The protein belongs to the TOP6A family. In terms of assembly, homodimer. Heterotetramer of two Top6A and two Top6B chains. It depends on Mg(2+) as a cofactor.

The enzyme catalyses ATP-dependent breakage, passage and rejoining of double-stranded DNA.. Relaxes both positive and negative superturns and exhibits a strong decatenase activity. The chain is Type 2 DNA topoisomerase 6 subunit A from Natronomonas pharaonis (strain ATCC 35678 / DSM 2160 / CIP 103997 / JCM 8858 / NBRC 14720 / NCIMB 2260 / Gabara) (Halobacterium pharaonis).